A 503-amino-acid polypeptide reads, in one-letter code: Probable cytosol aminopeptidase (503 aa).

Mn(2+) contacts are provided by Lys-274 and Asp-279. Lys-286 is a catalytic residue. Residues Asp-297, Asp-356, and Glu-358 each coordinate Mn(2+). Arg-360 is an active-site residue.

This sequence belongs to the peptidase M17 family. It depends on Mn(2+) as a cofactor.

It localises to the cytoplasm. It carries out the reaction Release of an N-terminal amino acid, Xaa-|-Yaa-, in which Xaa is preferably Leu, but may be other amino acids including Pro although not Arg or Lys, and Yaa may be Pro. Amino acid amides and methyl esters are also readily hydrolyzed, but rates on arylamides are exceedingly low.. It catalyses the reaction Release of an N-terminal amino acid, preferentially leucine, but not glutamic or aspartic acids.. Functionally, presumably involved in the processing and regular turnover of intracellular proteins. Catalyzes the removal of unsubstituted N-terminal amino acids from various peptides. The polypeptide is Probable cytosol aminopeptidase (Burkholderia thailandensis (strain ATCC 700388 / DSM 13276 / CCUG 48851 / CIP 106301 / E264)).